A 903-amino-acid chain; its full sequence is Protein U7 (903 aa).

A helical transmembrane segment spans residues 665–685 (KALLTFLTNIVFIVFVVNTLY).

It belongs to the herpesviridae US22 family.

It localises to the host membrane. This Human herpesvirus 6B (strain Z29) (HHV-6 variant B) protein is Protein U7 (U7).